We begin with the raw amino-acid sequence, 192 residues long: MGKRPVKEALVGDLQKLLEKSSVVMVIDYRGLSVAEITGLRRRMREHGGTCVVAKNTLMGVATRETAWRNIDPLLAGPSAFLFGNEKLKEMLKTYEDFARETKKTEFRGAVVDGTLVTLDGLKAIADLPPKEVLLAQFAGALKVLPTKIAVGINQVPTKVAVGINEVPAGLARVLEALRKQKEEQQQPQAAA.

This sequence belongs to the universal ribosomal protein uL10 family. In terms of assembly, part of the ribosomal stalk of the 50S ribosomal subunit. The N-terminus interacts with L11 and the large rRNA to form the base of the stalk. The C-terminus forms an elongated spine to which L12 dimers bind in a sequential fashion forming a multimeric L10(L12)X complex.

In terms of biological role, forms part of the ribosomal stalk, playing a central role in the interaction of the ribosome with GTP-bound translation factors. This Gloeobacter violaceus (strain ATCC 29082 / PCC 7421) protein is Large ribosomal subunit protein uL10.